The primary structure comprises 627 residues: MIYDYGYDVIVVGGGHAGVEAASASARIGAKTLLLTHNIDTIGQMSCNPAIGGIGKGHLVKEIDAMGGVMAKAIDMAGIQFRILNSRKGPAVRATRAQADRLLYKKAINSLINNQENLDIFQDSVDDLVVENNTVCGAITKTGITFRAKKVVLTVGTFLGGKIHIGKVSNAGGRAGDQPSNALAARLRSLPFRVDRLKTGTPPRIDRRSVDFSVMEVQHGDNPTPYFSFFSKGKIEHPRQIPCYITYTNNETHKIITDNLDKSAMYSGLIEGIGPRYCPSIEDKVVRFADKERHQIFVEPEGLNSIELYPNGLSTSLPFEVQCNYIRSIKGFEKAFIMRPGYAIEYDFFDPRDLKPTLETKHIKNLYFAGQINGTTGYEEAGAQGLVASINAAISIDSDKSWYPTRADSYIGVLIDDLITKGTKEPYRMFTSRAEYRLILREDNADLRLSNKACELGLLSKEDQQHFISKKNAIIENIAMMKNTWIGPQTQKARDLEKFLDKKMTRESTLFDLLKRPEIDYSKLQQISELNLNLQDDAVIEQIEISAKYSGYIERQNKDIEKTATFEQKAIPTDFNYSQVKGLSNEVLQKLTEQKPTTLGEASRIPGITPAAISLLTIYMKKTGFIK.

FAD-binding positions include 13 to 18, valine 125, and serine 180; that span reads GGGHAG. 274–288 is a binding site for NAD(+); the sequence is GPRYCPSIEDKVVRF. Glutamine 371 contributes to the FAD binding site.

It belongs to the MnmG family. As to quaternary structure, homodimer. Heterotetramer of two MnmE and two MnmG subunits. It depends on FAD as a cofactor.

The protein localises to the cytoplasm. Functionally, NAD-binding protein involved in the addition of a carboxymethylaminomethyl (cmnm) group at the wobble position (U34) of certain tRNAs, forming tRNA-cmnm(5)s(2)U34. This Francisella tularensis subsp. tularensis (strain FSC 198) protein is tRNA uridine 5-carboxymethylaminomethyl modification enzyme MnmG.